Reading from the N-terminus, the 351-residue chain is Uroporphyrinogen decarboxylase (351 aa).

Substrate-binding positions include 27 to 31 (RQAGR), Asp-77, Tyr-154, Thr-209, and His-327.

This sequence belongs to the uroporphyrinogen decarboxylase family. In terms of assembly, homodimer.

It localises to the cytoplasm. It catalyses the reaction uroporphyrinogen III + 4 H(+) = coproporphyrinogen III + 4 CO2. Its pathway is porphyrin-containing compound metabolism; protoporphyrin-IX biosynthesis; coproporphyrinogen-III from 5-aminolevulinate: step 4/4. In terms of biological role, catalyzes the decarboxylation of four acetate groups of uroporphyrinogen-III to yield coproporphyrinogen-III. The chain is Uroporphyrinogen decarboxylase from Thioalkalivibrio sulfidiphilus (strain HL-EbGR7).